Reading from the N-terminus, the 473-residue chain is Ribosomal RNA small subunit methyltransferase F (473 aa).

S-adenosyl-L-methionine-binding positions include 124–130 (ASAPGSK), E148, D175, and D193. The active-site Nucleophile is the C246.

This sequence belongs to the class I-like SAM-binding methyltransferase superfamily. RsmB/NOP family.

It localises to the cytoplasm. It catalyses the reaction cytidine(1407) in 16S rRNA + S-adenosyl-L-methionine = 5-methylcytidine(1407) in 16S rRNA + S-adenosyl-L-homocysteine + H(+). In terms of biological role, specifically methylates the cytosine at position 1407 (m5C1407) of 16S rRNA. The polypeptide is Ribosomal RNA small subunit methyltransferase F (Aliivibrio fischeri (strain ATCC 700601 / ES114) (Vibrio fischeri)).